The following is a 587-amino-acid chain: Protein cereblon (587 aa).

Disordered stretches follow at residues 1–56 (MDEE…PAEY), 78–113 (DVLQ…GLPN), and 157–195 (FSQE…IDIG). Polar residues-rich tracts occupy residues 22–31 (EDQSQSQGLQ) and 86–96 (SEGSHPSSDMS). The span at 159 to 168 (QERRRSRTSE) shows a compositional bias: basic and acidic residues. Over residues 170–181 (TSQEEAAEEPDD) the composition is skewed to acidic residues. The span at 182 to 191 (PPPQQPPLPP) shows a compositional bias: pro residues. The 227-residue stretch at 227-453 (HMLIFLHHHI…LIKSTFKDET (227 aa)) folds into the Lon N-terminal domain. The 110-residue stretch at 452-561 (ETLFFCRYCN…LSGSSVRIGK (110 aa)) folds into the CULT domain. 4 residues coordinate Zn(2+): cysteine 457, cysteine 460, cysteine 526, and cysteine 529.

The protein belongs to the CRBN family. Likely a component of a DCX (DDB1-CUL4-X-box) protein ligase complex. May interact with pic/DDB1. Ubiquitinated.

It localises to the nucleus. It participates in protein modification; protein ubiquitination. In terms of biological role, substrate recognition component of a DCX (DDB1-CUL4-X-box) E3 protein ligase complex that mediates the ubiquitination and subsequent proteasomal degradation of target proteins. Has an essential role in mediating growth by negatively regulating insulin signaling. It also has a role in maintaining presynaptic function in the neuromuscular junction synapses of third-instar larvae. The protein is Protein cereblon of Drosophila simulans (Fruit fly).